Here is a 147-residue protein sequence, read N- to C-terminus: Ribosome maturation factor RimP (147 aa).

This sequence belongs to the RimP family.

It localises to the cytoplasm. In terms of biological role, required for maturation of 30S ribosomal subunits. In Legionella pneumophila (strain Lens), this protein is Ribosome maturation factor RimP.